Reading from the N-terminus, the 245-residue chain is Protein mlo1 (245 aa).

The 35-residue stretch at 4–38 folds into the SAP domain; that stretch reads YKSLKVAELREKLAEKGLSTAGNKAELVSRLTAAT. The tract at residues 32–245 is disordered; sequence SRLTAATESN…AERFGVAAKN (214 aa). The segment covering 37 to 52 has biased composition (low complexity); sequence ATESNDENTSNNNATD. Acidic residues predominate over residues 58–70; sequence PPEDDIDWGDMEN. A compositionally biased stretch (polar residues) spans 109–118; sequence TSQAPETSTG. Basic and acidic residues predominate over residues 119–130; the sequence is AEEHQETTEESK. Residue serine 139 is modified to Phosphoserine. Positions 182 to 196 are enriched in low complexity; sequence SSNNKNHNQSKNPQN.

It belongs to the SAP domain-containing ribonucleoprotein family.

This Schizosaccharomyces pombe (strain 972 / ATCC 24843) (Fission yeast) protein is Protein mlo1 (mlo1).